The sequence spans 346 residues: NADH-ubiquinone oxidoreductase chain 2 (346 aa).

11 consecutive transmembrane segments (helical) span residues 1–21, 26–46, 60–80, 96–116, 122–142, 151–171, 178–198, 199–219, 242–262, 274–294, and 320–340; these read MSPY…MLIS, WVFM…ILVW, FIVQ…SLSG, MMIM…YWVV, LNYI…LAVL, SSML…GGLG, LLAF…VAGS, LLGL…FSIL, VLLG…GFFG, LLLG…FYYL, and LSGL…LVGG.

This sequence belongs to the complex I subunit 2 family.

It localises to the mitochondrion inner membrane. It carries out the reaction a ubiquinone + NADH + 5 H(+)(in) = a ubiquinol + NAD(+) + 4 H(+)(out). Core subunit of the mitochondrial membrane respiratory chain NADH dehydrogenase (Complex I) that is believed to belong to the minimal assembly required for catalysis. Complex I functions in the transfer of electrons from NADH to the respiratory chain. The immediate electron acceptor for the enzyme is believed to be ubiquinone. This Branchiostoma floridae (Florida lancelet) protein is NADH-ubiquinone oxidoreductase chain 2 (ND2).